The sequence spans 370 residues: DNA replication and repair protein RecF (370 aa).

ATP is bound at residue 30 to 37 (GENAQGKT).

The protein belongs to the RecF family.

It is found in the cytoplasm. In terms of biological role, the RecF protein is involved in DNA metabolism; it is required for DNA replication and normal SOS inducibility. RecF binds preferentially to single-stranded, linear DNA. It also seems to bind ATP. In Bacillus pumilus (strain SAFR-032), this protein is DNA replication and repair protein RecF.